The chain runs to 469 residues: Protein translocase subunit SecY (469 aa).

Residues 1 to 20 are Cytoplasmic-facing; the sequence is MSFIDSLATLGQYLPAVTKP. A helical transmembrane segment spans residues 21 to 47; that stretch reads KEKPSLGQKLVWSLVAVIIYLIMASTP. Residues 48–59 are Extracellular-facing; sequence LYGITSASFFKN. An intramembrane region (helical) is located at residues 60 to 67; sequence LILEQIIF. The chain crosses the membrane as a discontinuously helical span at residues 60 to 88; sequence LILEQIIFASTTGTLAQLGIGPIITAGLI. An intramembrane segment occupies 68-79; the sequence is ASTTGTLAQLGI. The helical intramembrane region spans 80-88; sequence GPIITAGLI. The Cytoplasmic segment spans residues 89 to 109; that stretch reads MQILAGSKLISIDLNDPDDRV. Residues 110-131 traverse the membrane as a helical segment; that stretch reads KFTEAQKGLAFIFILVESALFG. Topologically, residues 132–146 are extracellular; the sequence is YVLARTSTTINASIL. The chain crosses the membrane as a helical span at residues 147-171; sequence FIAGIVIAQLIVATYLILLLDELIQ. The Cytoplasmic segment spans residues 172-178; the sequence is KGWGLGS. Residues 179-197 form a helical membrane-spanning segment; sequence GVSLFILAGVMKIMFWDMF. The Extracellular portion of the chain corresponds to 198-240; that stretch reads GIASVSSQNLPIGFFPALFTALASHSDVLNLIVNTSTKNLFQP. Residues 241 to 262 form a helical membrane-spanning segment; it reads DLVGLVTTIALIIITIYLTTMT. Topologically, residues 263 to 287 are cytoplasmic; the sequence is IEIPVTSQKLRGIRRTIPLNFLYVS. Residues 288-309 form a helical membrane-spanning segment; sequence SIPVIFVAVLGSDIQLFASLAS. Residues 310 to 347 are Extracellular-facing; sequence YVSPSASNILNTVSGVFFFPPPNSAIPHSIYAVVLDPL. Residues 348-367 form a helical membrane-spanning segment; it reads GALEYAVVFIVLSILFGILW. Topologically, residues 368-410 are cytoplasmic; the sequence is VDVAGLDPATQAQQLVEAGIEIPGVRNNPKIIEGILARYIYPL. Residues 411–429 traverse the membrane as a helical segment; the sequence is AFFSSIIVGLIAVFATLLG. Over 430–432 the chain is Extracellular; that stretch reads AYG. The chain crosses the membrane as a helical span at residues 433 to 447; it reads TGIGILLAVTIAIQY. Over 448 to 469 the chain is Cytoplasmic; sequence YSLLAYERSLEMYPLLKRLIGE.

The protein belongs to the SecY/SEC61-alpha family. Component of the Sec protein translocase complex. Heterotrimer consisting of alpha (SecY), beta (SecG) and gamma (SecE) subunits. The heterotrimers can form oligomers, although 1 heterotrimer is thought to be able to translocate proteins. Interacts with the ribosome. May interact with SecDF, and other proteins may be involved.

It is found in the cell membrane. Functionally, the central subunit of the protein translocation channel SecYEG. Consists of two halves formed by TMs 1-5 and 6-10. These two domains form a lateral gate at the front which open onto the bilayer between TMs 2 and 7, and are clamped together by SecE at the back. The channel is closed by both a pore ring composed of hydrophobic SecY resides and a short helix (helix 2A) on the extracellular side of the membrane which forms a plug. The plug probably moves laterally to allow the channel to open. The ring and the pore may move independently. This is Protein translocase subunit SecY from Saccharolobus solfataricus (strain ATCC 35092 / DSM 1617 / JCM 11322 / P2) (Sulfolobus solfataricus).